A 310-amino-acid chain; its full sequence is Tyrosine recombinase XerC (310 aa).

The Core-binding (CB) domain maps to 22–103 (SQMLEAIEDF…SVKSFSTWAV (82 aa)). The Tyr recombinase domain maps to 124–304 (NLPRVLGEVQ…SSQRLLEAFR (181 aa)). Catalysis depends on residues arginine 165, lysine 189, histidine 256, arginine 259, and histidine 282. The active-site O-(3'-phospho-DNA)-tyrosine intermediate is tyrosine 291.

It belongs to the 'phage' integrase family. XerC subfamily. Forms a cyclic heterotetrameric complex composed of two molecules of XerC and two molecules of XerD.

It localises to the cytoplasm. Its function is as follows. Site-specific tyrosine recombinase, which acts by catalyzing the cutting and rejoining of the recombining DNA molecules. The XerC-XerD complex is essential to convert dimers of the bacterial chromosome into monomers to permit their segregation at cell division. It also contributes to the segregational stability of plasmids. The chain is Tyrosine recombinase XerC from Corynebacterium efficiens (strain DSM 44549 / YS-314 / AJ 12310 / JCM 11189 / NBRC 100395).